We begin with the raw amino-acid sequence, 258 residues long: Acetylglutamate kinase (258 aa).

Substrate-binding positions include 41-42, arginine 63, and asparagine 156; that span reads GG.

It belongs to the acetylglutamate kinase family. ArgB subfamily. In terms of assembly, homodimer.

The protein resides in the cytoplasm. It catalyses the reaction N-acetyl-L-glutamate + ATP = N-acetyl-L-glutamyl 5-phosphate + ADP. Its pathway is amino-acid biosynthesis; L-arginine biosynthesis; N(2)-acetyl-L-ornithine from L-glutamate: step 2/4. Catalyzes the ATP-dependent phosphorylation of N-acetyl-L-glutamate. The polypeptide is Acetylglutamate kinase (Geobacillus stearothermophilus (Bacillus stearothermophilus)).